A 182-amino-acid polypeptide reads, in one-letter code: Doublesex- and mab-3-related transcription factor C1 (182 aa).

Thr-15 is subject to Phosphoserine. The span at 26-39 (AQVDTATQEESSQG) shows a compositional bias: polar residues. Disordered stretches follow at residues 26 to 48 (AQVD…QHPE) and 136 to 174 (QTRH…PSGH).

The protein belongs to the DMRT family. As to expression, expressed in Sertoli cells in male testis.

This Mus musculus (Mouse) protein is Doublesex- and mab-3-related transcription factor C1 (Dmrtc1).